The primary structure comprises 343 residues: MMMRKPDITTIRDKGKPNHACGGNNNKPKLRKGLWSPDEDEKLIRYMLTNGQGCWSDIARNAGLLRCGKSCRLRWINYLRPDLKRGSFSPQEEDLIFHLHSILGNRWSQIATRLPGRTDNEIKNFWNSTLKKRLKNNSNNNTSSGSSPNNSNSNSLDPRDQHVDMGGNSTSLMDDYHHDENMMTVGNTMRMDSSSPFNVGPMVNSVGLNQLYDPLMISVPDNGYHQMGNTVNVFSVNGLGDYGNTILDPISKRVSVEGDDWFIPPSENTNVIACSTSNNLNLQALDPCFNSKNLCHSESFKVGNVLGIENGSWEIENPKIGDWDLDGLIDNNSSFPFLDFQVD.

The span at 1 to 16 (MMMRKPDITTIRDKGK) shows a compositional bias: basic and acidic residues. Residues 1–33 (MMMRKPDITTIRDKGKPNHACGGNNNKPKLRKG) form a disordered region. HTH myb-type domains are found at residues 27–79 (KPKL…INYL) and 80–134 (RPDL…KKRL). DNA-binding regions (H-T-H motif) lie at residues 55-79 (WSDI…INYL) and 107-130 (WSQI…NSTL). The interval 134–172 (LKNNSNNNTSSGSSPNNSNSNSLDPRDQHVDMGGNSTSL) is disordered. Positions 136-155 (NNSNNNTSSGSSPNNSNSNS) are enriched in low complexity.

As to expression, expressed specifically in fiber and vessel cells that are undergoing secondary wall thickening in floral stems. Expressed in vessels but not in xylary fibers in the developing secondary xylem of roots.

Its subcellular location is the nucleus. In terms of biological role, transcription factor that acts as a molecular switch in the NAC012/SND1-mediated transcriptional network regulating secondary wall biosynthesis. Is directly activated by NAC012/SND1 and its close homologs, including NAC043/NST1, NAC066/NST2, NAC101/VND6 and NAC030/VND7. Is required for functional expression of a number of secondary wall-associated transcription factors and secondary wall biosynthetic genes involved in cellulose, xylan and lignin synthesis. Functions redundantly with MYB46 in the transcriptional regulatory cascade leading to secondary wall formation in fibers and vessels. Transcription activator that binds to the DNA consensus sequence 5'-ACC[AT]A[AC][TC]-3', designated as the secondary wall MYB-responsive element (SMRE). Regulates directly numerous transcription factors and a number of genes involved in secondary wall biosynthesis that contain SMRE elements in their promoters. This chain is Transcription factor MYB83, found in Arabidopsis thaliana (Mouse-ear cress).